A 432-amino-acid polypeptide reads, in one-letter code: GTPase Obg (432 aa).

The Obg domain occupies Met-1–Leu-158. Residues Ala-159 to Glu-329 enclose the OBG-type G domain. Residues Gly-165–Ser-172, Phe-190–Val-194, Asp-212–Gly-215, Asn-282–Asp-285, and Ser-310–Ala-312 each bind GTP. Residues Ser-172 and Thr-192 each contribute to the Mg(2+) site. Residues Lys-350–Asp-428 form the OCT domain.

The protein belongs to the TRAFAC class OBG-HflX-like GTPase superfamily. OBG GTPase family. In terms of assembly, monomer. Mg(2+) serves as cofactor.

It localises to the cytoplasm. Functionally, an essential GTPase which binds GTP, GDP and possibly (p)ppGpp with moderate affinity, with high nucleotide exchange rates and a fairly low GTP hydrolysis rate. Plays a role in control of the cell cycle, stress response, ribosome biogenesis and in those bacteria that undergo differentiation, in morphogenesis control. This chain is GTPase Obg, found in Geobacillus kaustophilus (strain HTA426).